The chain runs to 916 residues: Neurofilament medium polypeptide (916 aa).

Over residues 1-10 the composition is skewed to polar residues; sequence MSYTLDSLGN. Positions 1–51 are disordered; that stretch reads MSYTLDSLGNPSAYRRVTETRSSFSRVSGSPSSGFRSQSWSRGSPSTVSSS. Position 2 is an N-acetylserine (Ser2). The head stretch occupies residues 2-104; that stretch reads SYTLDSLGNP…KLSRSNEKEQ (103 aa). Over residues 21–44 the composition is skewed to low complexity; the sequence is RSSFSRVSGSPSSGFRSQSWSRGS. At Ser30 the chain carries Phosphoserine. Position 42 is an omega-N-methylarginine (Arg42). O-linked (GlcNAc) threonine glycosylation is present at Thr47. Ser99 carries the phosphoserine modification. In terms of domain architecture, IF rod spans 101-412; it reads EKEQLQGLND…KLLEGEETRF (312 aa). Residues 105–136 are coil 1A; that stretch reads LQGLNDRFAGYIEKVHYLEQQNKEIEAEIQAL. The interval 137–149 is linker 1; that stretch reads RQKQASHAQLGDA. The segment at 150 to 248 is coil 1B; it reads YDQEIRELRA…EEEVADLLAQ (99 aa). Phosphoserine is present on Ser226. The interval 249-265 is linker 12; sequence IQASHITVERKDYLKTD. Residues 266–287 are coil 2A; sequence ISTALKEIRSQLESHSDQNMHQ. The interval 288-291 is linker 2; sequence AEEW. A coil 2B region spans residues 292–412; the sequence is FKCRYAKLTE…KLLEGEETRF (121 aa). Tyr320 carries the phosphotyrosine modification. A phosphoserine mark is found at Ser346 and Ser418. The tract at residues 413–916 is tail; that stretch reads STFAGSITGP…AIVKEVTQSD (504 aa). Thr431 carries an O-linked (GlcNAc) threonine glycan. Phosphoserine occurs at positions 467 and 483. Positions 485–851 are disordered; sequence KEEKKEAAEE…KKGGDKSEEK (367 aa). Over residues 493–505 the composition is skewed to acidic residues; the sequence is EEKEEEPEAEEEE. A Phosphoserine modification is found at Ser511. Acidic residues predominate over residues 521 to 541; that stretch reads KEEEGEKEEEEGQEEEEEEDE. A compositionally biased stretch (basic and acidic residues) spans 542 to 561; it reads GAKSDQAEEGGSEKEGSSEK. Phosphoserine is present on residues Ser545, Ser553, Ser558, and Ser559. Residues 562 to 582 are compositionally biased toward acidic residues; it reads EEGEQEEGETEAEAEGEEAEA. Thr571 is modified (phosphothreonine). Residues 583–614 show a composition bias toward basic and acidic residues; that stretch reads KEEKKVEEKSEEVATKEELVADAKVEKPEKAK. Tandem repeats lie at residues 614-626, 627-639, 640-652, 653-665, 666-678, and 679-691. A 6 X 13 AA approximate tandem repeats of K-S-P-V-[PS]-K-S-P-V-E-E-[KA]-[GAK] region spans residues 614-691; that stretch reads KSPVPKSPVE…VPKSPVEEAK (78 aa). 2 positions are modified to phosphoserine: Ser641 and Ser646. Ser680 and Ser685 each carry phosphoserine. 3 stretches are compositionally biased toward basic and acidic residues: residues 686 to 701, 707 to 742, and 755 to 778; these read PVEEAKSKAEVGKGEQ, KEVKEAPKEEKVEKKEEKPKDVPEKKKAESPVKEEA, and VHLEKETKEEGKPLQQEKEKEKAG. Residue Ser736 is modified to Phosphoserine. Phosphoserine is present on residues Ser783, Ser821, and Ser837. The span at 788-828 shows a compositional bias: basic and acidic residues; the sequence is SDKGAKGSRKEDIAVNGEVEGKEEVEQETKEKGSGREEEKG. Residues 839 to 851 show a composition bias toward basic and acidic residues; it reads ADEKKGGDKSEEK.

It belongs to the intermediate filament family. In terms of assembly, forms heterodimers with NEFL; which can further hetero-oligomerize (in vitro). Forms heterodimers with INA (in vitro). There are a number of repeats of the tripeptide K-S-P, NFM is phosphorylated on a number of the serines in this motif. It is thought that phosphorylation of NFM results in the formation of interfilament cross bridges that are important in the maintenance of axonal caliber. In terms of processing, phosphorylation seems to play a major role in the functioning of the larger neurofilament polypeptides (NF-M and NF-H), the levels of phosphorylation being altered developmentally and coincidentally with a change in the neurofilament function. Post-translationally, phosphorylated in the head and rod regions by the PKC kinase PKN1, leading to the inhibition of polymerization.

Its subcellular location is the cytoplasm. The protein resides in the cytoskeleton. It localises to the cell projection. It is found in the axon. Functionally, neurofilaments usually contain three intermediate filament proteins: NEFL, NEFM, and NEFH which are involved in the maintenance of neuronal caliber. May additionally cooperate with the neuronal intermediate filament proteins PRPH and INA to form neuronal filamentous networks. This Homo sapiens (Human) protein is Neurofilament medium polypeptide (NEFM).